The sequence spans 504 residues: Glucose-6-phosphate isomerase (504 aa).

Glu333 functions as the Proton donor in the catalytic mechanism. Catalysis depends on residues His364 and Lys473.

This sequence belongs to the GPI family.

The protein localises to the cytoplasm. The enzyme catalyses alpha-D-glucose 6-phosphate = beta-D-fructose 6-phosphate. The protein operates within carbohydrate biosynthesis; gluconeogenesis. It functions in the pathway carbohydrate degradation; glycolysis; D-glyceraldehyde 3-phosphate and glycerone phosphate from D-glucose: step 2/4. In terms of biological role, catalyzes the reversible isomerization of glucose-6-phosphate to fructose-6-phosphate. The chain is Glucose-6-phosphate isomerase from Xanthomonas euvesicatoria pv. vesicatoria (strain 85-10) (Xanthomonas campestris pv. vesicatoria).